The following is an 87-amino-acid chain: HssA/B-like protein 57 (87 aa).

It belongs to the hssA/B family.

This is HssA/B-like protein 57 (hssl57) from Dictyostelium discoideum (Social amoeba).